The primary structure comprises 128 residues: Transcription antitermination protein NusB (128 aa).

It belongs to the NusB family.

Functionally, involved in transcription antitermination. Required for transcription of ribosomal RNA (rRNA) genes. Binds specifically to the boxA antiterminator sequence of the ribosomal RNA (rrn) operons. The protein is Transcription antitermination protein NusB of Staphylococcus haemolyticus (strain JCSC1435).